The following is a 555-amino-acid chain: Coiled-coil domain-containing protein 102A (555 aa).

3 disordered regions span residues 1 to 68 (MSHG…ADGD), 136 to 202 (LAGA…GSQE), and 214 to 254 (PEEP…EEDA). 3 positions are modified to phosphoserine: serine 12, serine 26, and serine 28. The span at 37-61 (SLPPTPPSGTPSPGPPPALPLPPTP) shows a compositional bias: pro residues. Residues 72-161 (REELRLRELE…ARGRELARLR (90 aa)) are a coiled coil. Basic and acidic residues-rich tracts occupy residues 136–159 (LAGA…ELAR) and 166–183 (GVDR…REQE). Low complexity predominate over residues 224-236 (RSAGAGAPRGSSG). Coiled-coil stretches lie at residues 268–401 (QKVL…RRQT) and 432–522 (KLKK…QNAP). The disordered stretch occupies residues 478–555 (ELDEAHNQAR…EDEDLQIQVA (78 aa)). Acidic residues predominate over residues 536–555 (EAGDGASDLDEDEDLQIQVA). Phosphoserine is present on serine 542.

This chain is Coiled-coil domain-containing protein 102A (CCDC102A), found in Bos taurus (Bovine).